The sequence spans 116 residues: Iron-sulfur cluster insertion protein ErpA (116 aa).

The iron-sulfur cluster site is built by C44, C108, and C110.

The protein belongs to the HesB/IscA family. In terms of assembly, homodimer. The cofactor is iron-sulfur cluster.

Its function is as follows. Required for insertion of 4Fe-4S clusters for at least IspG. The protein is Iron-sulfur cluster insertion protein ErpA of Nitrosococcus oceani (strain ATCC 19707 / BCRC 17464 / JCM 30415 / NCIMB 11848 / C-107).